Reading from the N-terminus, the 65-residue chain is Protein I2 homolog (65 aa).

Residues 40-60 (LSWLTIFIIFVVCIVVFTFLY) traverse the membrane as a helical segment.

It belongs to the chordopoxvirinae I2 family.

It is found in the virion membrane. In terms of biological role, late protein which probably plays a role in virus entry into the host cell. This Fowlpox virus (strain NVSL) (FPV) protein is Protein I2 homolog.